A 317-amino-acid chain; its full sequence is Melanocyte-stimulating hormone receptor (317 aa).

Over 1–37 (MPVQGSQRRLLGSLNSTPTATPHLGLAANQTGARCLE) the chain is Extracellular. A glycan (N-linked (GlcNAc...) asparagine) is linked at asparagine 29. Residues 38-63 (VSVPDGLFLSLGLVSLVENVLVVTAI) traverse the membrane as a helical segment. Topologically, residues 64-72 (AKNRNLHSP) are cytoplasmic. The helical transmembrane segment at 73-93 (MYCFICCLALSDLLVSGSNML) threads the bilayer. Over 94–118 (ETAVTLLLEAGALAARAAVVQQLDN) the chain is Extracellular. Residues 119–140 (VIDVITCSSMLSSLCFLGAIAV) traverse the membrane as a helical segment. Over 141-163 (DRYISIFYALRYHSIVTLPRARR) the chain is Cytoplasmic. The helical transmembrane segment at 164 to 183 (AVAAIWVASVLCSTLFIAYY) threads the bilayer. The Extracellular segment spans residues 184-191 (DHAAVLLC). Residues 192 to 211 (LVVFFLAMLVLMAVLYVHML) form a helical membrane-spanning segment. The Cytoplasmic segment spans residues 212 to 240 (ARACQHAQGIARLHKRQRLAHQGFGLKGA). The chain crosses the membrane as a helical span at residues 241–266 (ATLTILLGIFFLCWGPFFLHLTLIVL). Over 267-279 (CPQHPTCSCIFKN) the chain is Extracellular. A helical membrane pass occupies residues 280–300 (FNLFLALIICNAIIDPLIYAF). The Cytoplasmic portion of the chain corresponds to 301-317 (RSQELRRTLKEVLLCSW). Cysteine 315 carries S-palmitoyl cysteine lipidation.

It belongs to the G-protein coupled receptor 1 family. As to quaternary structure, interacts with MGRN1, but does not undergo MGRN1-mediated ubiquitination; this interaction competes with GNAS-binding and thus inhibits agonist-induced cAMP production. Interacts with OPN3; the interaction results in a decrease in MC1R-mediated cAMP signaling and ultimately a decrease in melanin production in melanocytes.

The protein localises to the cell membrane. Its function is as follows. Receptor for MSH (alpha, beta and gamma) and ACTH. The activity of this receptor is mediated by G proteins which activate adenylate cyclase. Mediates melanogenesis, the production of eumelanin (black/brown) and phaeomelanin (red/yellow), via regulation of cAMP signaling in melanocytes. The polypeptide is Melanocyte-stimulating hormone receptor (MC1R) (Macaca sylvanus (Barbary macaque)).